Reading from the N-terminus, the 1704-residue chain is MEYKSIEKSIVRESKVRNVFSKVCKKELFYTNLKVNSASEELLKSSKSLFAYPSSIGGGSCLSITKLSNHGKVPDTPFCIKGHTDPISCFEFSNFNDYVIATGSRDCTIKIWEVPEEGLIKDNLVTPLITLPKQQKRVTGVYFHPSVDSLFMSSTLDYTLDIWDLSSTGEQSSVIQKLTGHEDLIMSVGWNTWSGGDKLATSSRDKKMRLYDPRSQSTPIQTISTHEGAQGFKLCWADSNGLELICTVGANKSAQRQLYLWDPRQLQSSQPLVSKDVTTDSSILSPYYDFGTNMVYLGGKGDGIYYYEIEKNNAHHIGKATFGNVTQSAITLLPKSVVDVNICEIDRFLRLTAANSVEMVSFMCPRKSQLFQEDIFPPCPSGDPTTDCSLWFADKQLKVIPHTISMKPDGVQSIYEVSEEEGGKSKEKDKLEQLSKLSIGNSGSGGGGGDGDGNGGDSPFITEGIVKQEIEGWLFNSYENRYLKIVKDKIYCFLNEDSAQAIWDSPVLNIKYVDIYDEDENTSGEEWSLRFNIILLNGKEHRMECSTVKQRDAWCQSINAYREMKQQVDQSVVSPTMGEFHLVNTTPVAPSPMVISENKNALQKFSVPSPKEQQQQQQQGSESPNSTTPKSSTPTQTRHHSVLSRNPSYTSLKSSGGFSKPSPSSSTSTPPSTFASPLSIAQTSSTTTTTTTTTTTTSSSSTPPPLRANNSTSSTPLNSSTGIKQSDIVIEGNLTELIPGLLWNSNTEKWYVVSEGMLYSYKNKSLKQLDPLETIHLEKAISAHKTKEIFTIQGFSFQLSTPNRIIHLLAKTKEERGSWLSVLRQNLKSSGETKPKSVLTRASTMDELISSPMSDDESNTNEGGVEEEEEEQPLEGQLSRKLPGIFSMWGQCFVALLAEDLFVSRNKLSTTPELRIQLSSISLIKKISPNEFTLYDSMNQVVCNFRTIAPTAEFDDCTRWIDGLEAARKRSIDIIKMFGINEKEVLSPLPSSSSIPSSGSNGNLLDPSADDLTRYLDLTAIKNGKQKILIQVKGKRKIRVRMVKLSTSSLNCHNSFILDAGPRIFVWAGSKTSRVNKAKALDFANRIRTKERGGKSTLIQLDQGRDEQSFDFWEILGGNSSDPIATTPTPEEQDTESIKTTIYRVGLDVKKNSLRARLAWEGTDWKLPNKEILNTKFVYVVDCVTEIFVWVGKESSSIQRKMATKVALVLQAQKDRVDWTKITRLTEFGENNLFKEKFANYPGMLPISTTRQEIKSHVATSKVEHKIETLASRMTTPFIDNEALFTIPIDEGGRVKVWKIEDYEKIDHPQHLYSQFFSSDSYIVLYTYMQNNKEAHVIYYYLGRDSSINEKGTSAYLTVDLNESLVGACVQTRVVANKECKNFLNLFKTKMVIHKGKYNNYDPKKPSLYQVKGLDKIDIRAVQVEFSSSMLNTLHVSILRTPEKIYIWHGKFSLDAEQNSALSIAENFNSTSAPIEILKEGSESNEFWSAFESTGGRQKYFNDIMIQSSSIPTSFTYKPRFFVCSNASGIVEVTEESPFSQDDLDIGSVCILDVQSHIYLWIGSRATHRTKRASMEVVLNFIETSKLGHSKEHTKVLIATPFEEPIGFKSYFRAWCTSKYPKNKLPLVEKDGIPVEQVLKDYLKEIYTYEELLADPLPAGVDSTKLDTYLNDEDFEKVFKMTRTEWLKIPAWKREGIKKELFLF.

WD repeat units follow at residues 82–122, 133–173, 180–221, and 225–271; these read GHTD…LIKD, KQQK…EQSS, GHED…TPIQ, and THEG…SSQP. Disordered regions lie at residues 439–460 and 606–721; these read IGNS…DSPF and SVPS…NSST. Residues 442-456 show a composition bias toward gly residues; sequence SGSGGGGGDGDGNGG. Residues 459 to 563 form the PH 1 domain; that stretch reads PFITEGIVKQ…WCQSINAYRE (105 aa). 3 stretches are compositionally biased toward low complexity: residues 613–636, 651–701, and 709–721; these read QQQQ…TPTQ, SLKS…SSSS, and NNST…NSST. PH domains follow at residues 727–828 and 871–969; these read DIVI…QNLK and EQPL…AARK. Positions 848-877 are disordered; that stretch reads LISSPMSDDESNTNEGGVEEEEEEQPLEGQ. A compositionally biased stretch (acidic residues) spans 854–873; that stretch reads SDDESNTNEGGVEEEEEEQP. Gelsolin-like repeat units lie at residues 1025 to 1119, 1138 to 1241, 1293 to 1390, 1404 to 1494, and 1520 to 1615; these read KQKI…LGGN, IKTT…FANY, GRVK…FKTK, KKPS…FEST, and RFFV…FRAW. The HP domain maps to 1641-1704; that stretch reads DYLKEIYTYE…EGIKKELFLF (64 aa).

It is found in the membrane. It localises to the cytoplasm. Its subcellular location is the cytoskeleton. Its function is as follows. May function as a linker between membranes and the actin cytoskeleton. This chain is Villidin (vilA), found in Dictyostelium discoideum (Social amoeba).